Consider the following 204-residue polypeptide: Peptide deformylase (204 aa).

Fe cation contacts are provided by cysteine 131 and histidine 174. Residue glutamate 175 is part of the active site. Histidine 178 contacts Fe cation.

Belongs to the polypeptide deformylase family. Fe(2+) serves as cofactor.

It carries out the reaction N-terminal N-formyl-L-methionyl-[peptide] + H2O = N-terminal L-methionyl-[peptide] + formate. Functionally, removes the formyl group from the N-terminal Met of newly synthesized proteins. Requires at least a dipeptide for an efficient rate of reaction. N-terminal L-methionine is a prerequisite for activity but the enzyme has broad specificity at other positions. The sequence is that of Peptide deformylase from Streptococcus pyogenes serotype M18 (strain MGAS8232).